The chain runs to 279 residues: Ribosomal RNA small subunit methyltransferase I (279 aa).

Belongs to the methyltransferase superfamily. RsmI family.

It localises to the cytoplasm. The enzyme catalyses cytidine(1402) in 16S rRNA + S-adenosyl-L-methionine = 2'-O-methylcytidine(1402) in 16S rRNA + S-adenosyl-L-homocysteine + H(+). Functionally, catalyzes the 2'-O-methylation of the ribose of cytidine 1402 (C1402) in 16S rRNA. The chain is Ribosomal RNA small subunit methyltransferase I from Synechocystis sp. (strain ATCC 27184 / PCC 6803 / Kazusa).